Here is a 734-residue protein sequence, read N- to C-terminus: Photosystem I P700 chlorophyll a apoprotein A2 (734 aa).

8 helical membrane-spanning segments follow: residues 46 to 69 (IFASHFGQLTVIFLWTSGNLFHVA), 135 to 158 (LYTGAIFLLALSALFLIAGWLHLQ), 175 to 199 (LNHHLSGLFGVSSLAWAGHLVHVAI), 273 to 291 (IAHHHLAIAVVFIIAGHMY), 330 to 353 (LHFQLGLALAALGVITSLVAQHMY), 369 to 395 (AALYTHHQYIAGFLMTGAFAHGAIFFI), 417 to 439 (AIISHLSWASLFLGFHTLGLYVH), and 517 to 535 (FLVHHAIALGLHTTTLILV). Residues Cys-559 and Cys-568 each contribute to the [4Fe-4S] cluster site. Transmembrane regions (helical) follow at residues 575-596 (AFYLAVFWMLNTIGWVTFYWHW) and 643-665 (LSVWAWMFLFGHLVWAIGFMFLI). Chlorophyll a-binding residues include His-654, Met-662, and Tyr-670. Trp-671 serves as a coordination point for phylloquinone. A helical transmembrane segment spans residues 707 to 727 (LVGLAHFSVGYIFTYAAFLIA).

This sequence belongs to the PsaA/PsaB family. As to quaternary structure, the PsaA/B heterodimer binds the P700 chlorophyll special pair and subsequent electron acceptors. PSI consists of a core antenna complex that captures photons, and an electron transfer chain that converts photonic excitation into a charge separation. The eukaryotic PSI reaction center is composed of at least 11 subunits. It depends on P700 is a chlorophyll a/chlorophyll a' dimer, A0 is one or more chlorophyll a, A1 is one or both phylloquinones and FX is a shared 4Fe-4S iron-sulfur center. as a cofactor.

It is found in the plastid. The protein localises to the chloroplast thylakoid membrane. The catalysed reaction is reduced [plastocyanin] + hnu + oxidized [2Fe-2S]-[ferredoxin] = oxidized [plastocyanin] + reduced [2Fe-2S]-[ferredoxin]. In terms of biological role, psaA and PsaB bind P700, the primary electron donor of photosystem I (PSI), as well as the electron acceptors A0, A1 and FX. PSI is a plastocyanin-ferredoxin oxidoreductase, converting photonic excitation into a charge separation, which transfers an electron from the donor P700 chlorophyll pair to the spectroscopically characterized acceptors A0, A1, FX, FA and FB in turn. Oxidized P700 is reduced on the lumenal side of the thylakoid membrane by plastocyanin. The protein is Photosystem I P700 chlorophyll a apoprotein A2 of Psilotum nudum (Whisk fern).